A 344-amino-acid chain; its full sequence is tRNA N6-adenosine threonylcarbamoyltransferase (344 aa).

Residues His-111 and His-115 each coordinate Fe cation. Residues 133–137 (LVSGG), Asp-166, Gly-179, and Asn-283 contribute to the substrate site. Residue Asp-311 participates in Fe cation binding.

The protein belongs to the KAE1 / TsaD family. The cofactor is Fe(2+).

It localises to the cytoplasm. It catalyses the reaction L-threonylcarbamoyladenylate + adenosine(37) in tRNA = N(6)-L-threonylcarbamoyladenosine(37) in tRNA + AMP + H(+). In terms of biological role, required for the formation of a threonylcarbamoyl group on adenosine at position 37 (t(6)A37) in tRNAs that read codons beginning with adenine. Is involved in the transfer of the threonylcarbamoyl moiety of threonylcarbamoyl-AMP (TC-AMP) to the N6 group of A37, together with TsaE and TsaB. TsaD likely plays a direct catalytic role in this reaction. This Orientia tsutsugamushi (strain Ikeda) (Rickettsia tsutsugamushi) protein is tRNA N6-adenosine threonylcarbamoyltransferase.